The chain runs to 171 residues: Endoribonuclease YbeY (171 aa).

His130, His134, and His140 together coordinate Zn(2+).

It belongs to the endoribonuclease YbeY family. Zn(2+) serves as cofactor.

It is found in the cytoplasm. Single strand-specific metallo-endoribonuclease involved in late-stage 70S ribosome quality control and in maturation of the 3' terminus of the 16S rRNA. The chain is Endoribonuclease YbeY from Neisseria meningitidis serogroup A / serotype 4A (strain DSM 15465 / Z2491).